Here is a 158-residue protein sequence, read N- to C-terminus: MTETTEKVESIGPLDVKRVMAALPHRFPMLLVDRVETLIPGEKIVAIKAVTINEPFFTGHFPGNPIMPGVLIVEALAQAAGVLAIESLGLTGTGKLVYFMAINETKFRIPVEPGILLRLEVEFLQKRAKICKFKARALIEDKVAAETEFTAMIADPAN.

His-60 is a catalytic residue.

It belongs to the thioester dehydratase family. FabZ subfamily.

Its subcellular location is the cytoplasm. It carries out the reaction a (3R)-hydroxyacyl-[ACP] = a (2E)-enoyl-[ACP] + H2O. Involved in unsaturated fatty acids biosynthesis. Catalyzes the dehydration of short chain beta-hydroxyacyl-ACPs and long chain saturated and unsaturated beta-hydroxyacyl-ACPs. The polypeptide is 3-hydroxyacyl-[acyl-carrier-protein] dehydratase FabZ (Zymomonas mobilis subsp. mobilis (strain ATCC 31821 / ZM4 / CP4)).